The primary structure comprises 395 residues: Cytoplasmic tRNA 2-thiolation protein 1 (395 aa).

Residues Thr-297–Lys-309 show a composition bias toward basic residues. Residues Thr-297–Asn-335 are disordered.

Belongs to the TtcA family. CTU1/NCS6/ATPBD3 subfamily.

The protein localises to the cytoplasm. It functions in the pathway tRNA modification; 5-methoxycarbonylmethyl-2-thiouridine-tRNA biosynthesis. Its function is as follows. Plays a central role in 2-thiolation of mcm(5)S(2)U at tRNA wobble positions of tRNA(Lys), tRNA(Glu) and tRNA(Gln). Directly binds tRNAs and probably acts by catalyzing adenylation of tRNAs, an intermediate required for 2-thiolation. It is unclear whether it acts as a sulfurtransferase that transfers sulfur from thiocarboxylated URM1 onto the uridine of tRNAs at wobble position. Prior mcm(5) tRNA modification by the elongator complex is required for 2-thiolation. May also be involved in protein urmylation. In Candida albicans (strain SC5314 / ATCC MYA-2876) (Yeast), this protein is Cytoplasmic tRNA 2-thiolation protein 1.